Reading from the N-terminus, the 444-residue chain is Putative methylesterase 15, chloroplastic (444 aa).

A compositionally biased stretch (polar residues) spans 1–27 (MGNSLRCISQEQDPNQKKPSSVVNGNS). Disordered regions lie at residues 1–36 (MGNS…RRLS) and 48–91 (PSLS…DSLI). Residues 1–58 (MGNSLRCISQEQDPNQKKPSSVVNGNSSEKHVRRLSLIPSFRRRTLLPSLSCSGSSTS) constitute a chloroplast transit peptide. A compositionally biased stretch (low complexity) spans 53-63 (SGSSTSSTSKK). Residues 64 to 80 (GGIKTKKKIRERHHQEQ) are compositionally biased toward basic residues. The segment covering 81-90 (HHHDHEKDSL) has biased composition (basic and acidic residues). One can recognise an AB hydrolase-1 domain in the interval 188–312 (FVLVHGGGFG…QPDSNYDLME (125 aa)). Asp262 serves as the catalytic Acyl-ester intermediate. Active-site charge relay system residues include Asp390 and His418.

The protein belongs to the AB hydrolase superfamily. Methylesterase family.

The protein resides in the plastid. It is found in the chloroplast. Putative methylesterase. The sequence is that of Putative methylesterase 15, chloroplastic from Arabidopsis thaliana (Mouse-ear cress).